The primary structure comprises 349 residues: Galactose-1-phosphate uridylyltransferase (349 aa).

29 to 32 (RAKR) is a UDP-alpha-D-glucose binding site. Cys-53 and Cys-56 together coordinate Zn(2+). Residue 78 to 79 (ND) coordinates UDP-alpha-D-glucose. A Zn(2+)-binding site is contributed by His-116. Residues Asn-154 and 160–162 (GCS) contribute to the UDP-alpha-D-glucose site. Residue His-165 participates in Zn(2+) binding. His-167 serves as the catalytic Tele-UMP-histidine intermediate. UDP-alpha-D-glucose is bound at residue Gln-169. Fe cation is bound by residues Glu-183, His-282, His-297, and His-299. Residues 312–313 (KF), 317–318 (YE), and Gln-324 contribute to the UDP-alpha-D-glucose site.

Belongs to the galactose-1-phosphate uridylyltransferase type 1 family. The cofactor is Zn(2+).

The catalysed reaction is alpha-D-galactose 1-phosphate + UDP-alpha-D-glucose = alpha-D-glucose 1-phosphate + UDP-alpha-D-galactose. Its pathway is carbohydrate metabolism; galactose metabolism. The protein is Galactose-1-phosphate uridylyltransferase (galT) of Haemophilus influenzae (strain ATCC 51907 / DSM 11121 / KW20 / Rd).